Here is a 156-residue protein sequence, read N- to C-terminus: MASRVLSAYVSRLPAAFAPLPRVRMLAVARPLSTALCSAGTQTRLGPLQPALVLAQVPGRVTQLCRQYSDMPPLTLEGIQDRVLYVLKLYDKIDPEKLSVNSHFMKDLGLDSLDQVEIIMAMEDEFGFEIPDIDAEKLMCPQEIVDYIADKKDVYE.

A mitochondrion-targeting transit peptide spans 1–68; it reads MASRVLSAYV…GRVTQLCRQY (68 aa). Residues 77-152 form the Carrier domain; it reads EGIQDRVLYV…EIVDYIADKK (76 aa). N6-acetyllysine is present on Lys88. Position 112 is an O-(pantetheine 4'-phosphoryl)serine (Ser112).

It belongs to the acyl carrier protein (ACP) family. In terms of assembly, mammalian complex I is composed of 45 different subunits. Interacts with ETFRF1. Identified in a complex composed of MALSU1, MIEF1 upstream open reading frame protein and NDUFAB1; within the trimeric complex, MIEF1 upstream open reading frame protein functions as a bridging scaffold that interacts with MALSU1 on one side, and with NDUFAB1 on the other side. The complex interacts with the mitochondrial large ribosomal subunit. Interacts with alpha-1-microglobulin chain; this interaction is required for the maintenance of mitochondrial redox homeostasis. Component of the mitochondrial core iron-sulfur cluster (ISC) complex composed of NFS1, LYRM4, NDUFAB1, ISCU, FXN, and FDX2; this complex is a heterohexamer containing two copies of each monomer. Component of the cyteine desulfurase complex composed of NFS1, LYRM4 and NDUFAB1; this complex contributes to the stability and cysteine desulfurase activity of NFS1. In terms of processing, phosphopantetheinylation at Ser-112 is essential for interactions with LYR motif-containing proteins.

It localises to the mitochondrion. Carrier of the growing fatty acid chain in fatty acid biosynthesis. Accessory and non-catalytic subunit of the mitochondrial membrane respiratory chain NADH dehydrogenase (Complex I), which functions in the transfer of electrons from NADH to the respiratory chain. Accessory protein, of the core iron-sulfur cluster (ISC) assembly complex, that regulates, in association with LYRM4, the stability and the cysteine desulfurase activity of NFS1 and participates in the [2Fe-2S] clusters assembly on the scaffolding protein ISCU. The core iron-sulfur cluster (ISC) assembly complex is involved in the de novo synthesis of a [2Fe-2S] cluster, the first step of the mitochondrial iron-sulfur protein biogenesis. This process is initiated by the cysteine desulfurase complex (NFS1:LYRM4:NDUFAB1) that produces persulfide which is delivered on the scaffold protein ISCU in a FXN-dependent manner. Then this complex is stabilized by FDX2 which provides reducing equivalents to accomplish the [2Fe-2S] cluster assembly. Finally, the [2Fe-2S] cluster is transferred from ISCU to chaperone proteins, including HSCB, HSPA9 and GLRX5. This Pongo pygmaeus (Bornean orangutan) protein is Acyl carrier protein, mitochondrial.